The following is a 717-amino-acid chain: Photosystem I P700 chlorophyll a apoprotein A1 (717 aa).

Helical transmembrane passes span 58–81 (VFSA…FHGA), 144–167 (LYCT…FHYH), 183–207 (LNHH…HVSL), 279–297 (IAHH…GHMY), 334–357 (WHAQ…HHMY), 373–399 (LSLF…IFMV), 421–443 (AIIS…LYIH), and 519–537 (FLVH…LILL). Residues Cys-561 and Cys-570 each contribute to the [4Fe-4S] cluster site. The next 2 membrane-spanning stretches (helical) occupy residues 577–598 (HVFL…HFSW) and 652–674 (LSAY…MFLF). His-663 contacts chlorophyll a'. 2 residues coordinate chlorophyll a: Met-671 and Tyr-679. Trp-680 provides a ligand contact to phylloquinone. The chain crosses the membrane as a helical span at residues 712-717 (AVGVTH).

It belongs to the PsaA/PsaB family. As to quaternary structure, the PsaA/B heterodimer binds the P700 chlorophyll special pair and subsequent electron acceptors. PSI consists of a core antenna complex that captures photons, and an electron transfer chain that converts photonic excitation into a charge separation. The eukaryotic PSI reaction center is composed of at least 11 subunits. P700 is a chlorophyll a/chlorophyll a' dimer, A0 is one or more chlorophyll a, A1 is one or both phylloquinones and FX is a shared 4Fe-4S iron-sulfur center. is required as a cofactor.

Its subcellular location is the plastid. It localises to the chloroplast thylakoid membrane. The catalysed reaction is reduced [plastocyanin] + hnu + oxidized [2Fe-2S]-[ferredoxin] = oxidized [plastocyanin] + reduced [2Fe-2S]-[ferredoxin]. Its function is as follows. PsaA and PsaB bind P700, the primary electron donor of photosystem I (PSI), as well as the electron acceptors A0, A1 and FX. PSI is a plastocyanin-ferredoxin oxidoreductase, converting photonic excitation into a charge separation, which transfers an electron from the donor P700 chlorophyll pair to the spectroscopically characterized acceptors A0, A1, FX, FA and FB in turn. Oxidized P700 is reduced on the lumenal side of the thylakoid membrane by plastocyanin. The sequence is that of Photosystem I P700 chlorophyll a apoprotein A1 from Drimys winteri (Winter's bark).